Here is a 126-residue protein sequence, read N- to C-terminus: Prefoldin subunit beta (126 aa).

This sequence belongs to the prefoldin subunit beta family. In terms of assembly, heterohexamer of two alpha and four beta subunits.

Its subcellular location is the cytoplasm. Its function is as follows. Molecular chaperone capable of stabilizing a range of proteins. Seems to fulfill an ATP-independent, HSP70-like function in archaeal de novo protein folding. This is Prefoldin subunit beta from Methanocella arvoryzae (strain DSM 22066 / NBRC 105507 / MRE50).